The chain runs to 115 residues: Large ribosomal subunit protein bL20 (115 aa).

Belongs to the bacterial ribosomal protein bL20 family.

In terms of biological role, binds directly to 23S ribosomal RNA and is necessary for the in vitro assembly process of the 50S ribosomal subunit. It is not involved in the protein synthesizing functions of that subunit. This Synechococcus sp. (strain RCC307) protein is Large ribosomal subunit protein bL20.